We begin with the raw amino-acid sequence, 83 residues long: Transmembrane protein EP84R (83 aa).

The next 2 helical transmembrane spans lie at 31–51 (IIGV…IIIL) and 59–79 (TGSI…FLIY).

It belongs to the asfivirus EP84R family.

Its subcellular location is the virion membrane. The polypeptide is Transmembrane protein EP84R (Ornithodoros (relapsing fever ticks)).